We begin with the raw amino-acid sequence, 68 residues long: MKAGIHPDYNEVTVTCSCGNTFVTRSTLGKPALHVEVCASCHPFYTGKQKIVDTAGRVEKFRQRYGMK.

Zn(2+)-binding residues include Cys16, Cys18, Cys38, and Cys41.

Belongs to the bacterial ribosomal protein bL31 family. Type A subfamily. As to quaternary structure, part of the 50S ribosomal subunit. The cofactor is Zn(2+).

In terms of biological role, binds the 23S rRNA. The chain is Large ribosomal subunit protein bL31 from Thiobacillus denitrificans (strain ATCC 25259 / T1).